The sequence spans 366 residues: Flagellar P-ring protein (366 aa).

The first 23 residues, methionine 1–alanine 23, serve as a signal peptide directing secretion.

It belongs to the FlgI family. As to quaternary structure, the basal body constitutes a major portion of the flagellar organelle and consists of four rings (L,P,S, and M) mounted on a central rod.

The protein localises to the periplasm. Its subcellular location is the bacterial flagellum basal body. In terms of biological role, assembles around the rod to form the L-ring and probably protects the motor/basal body from shearing forces during rotation. This chain is Flagellar P-ring protein, found in Idiomarina loihiensis (strain ATCC BAA-735 / DSM 15497 / L2-TR).